A 482-amino-acid polypeptide reads, in one-letter code: tRNA sulfurtransferase (482 aa).

The THUMP domain maps to 61–165 (EAIRDALTRI…QDRLLLIKSR (105 aa)). ATP-binding positions include 183–184 (LI), Lys265, Gly287, and Gln296. Cys344 and Cys456 form a disulfide bridge. One can recognise a Rhodanese domain in the interval 404–482 (FVPTDVLLDI…GFSNVKVYRP (79 aa)). Cys456 functions as the Cysteine persulfide intermediate in the catalytic mechanism.

The protein belongs to the ThiI family.

It localises to the cytoplasm. It catalyses the reaction [ThiI sulfur-carrier protein]-S-sulfanyl-L-cysteine + a uridine in tRNA + 2 reduced [2Fe-2S]-[ferredoxin] + ATP + H(+) = [ThiI sulfur-carrier protein]-L-cysteine + a 4-thiouridine in tRNA + 2 oxidized [2Fe-2S]-[ferredoxin] + AMP + diphosphate. It carries out the reaction [ThiS sulfur-carrier protein]-C-terminal Gly-Gly-AMP + S-sulfanyl-L-cysteinyl-[cysteine desulfurase] + AH2 = [ThiS sulfur-carrier protein]-C-terminal-Gly-aminoethanethioate + L-cysteinyl-[cysteine desulfurase] + A + AMP + 2 H(+). Its pathway is cofactor biosynthesis; thiamine diphosphate biosynthesis. In terms of biological role, catalyzes the ATP-dependent transfer of a sulfur to tRNA to produce 4-thiouridine in position 8 of tRNAs, which functions as a near-UV photosensor. Also catalyzes the transfer of sulfur to the sulfur carrier protein ThiS, forming ThiS-thiocarboxylate. This is a step in the synthesis of thiazole, in the thiamine biosynthesis pathway. The sulfur is donated as persulfide by IscS. This is tRNA sulfurtransferase from Pectobacterium atrosepticum (strain SCRI 1043 / ATCC BAA-672) (Erwinia carotovora subsp. atroseptica).